The primary structure comprises 318 residues: DNA repair nuclease/redox regulator APEX1 (318 aa).

Positions 1–59 (MPKRGKKGAVVEDAEEPKTEPEAKKSKAGAKKNEKEAVGEGAVLYEDPPDQKTSPSGKS) are disordered. Residues 2-33 (PKRGKKGAVVEDAEEPKTEPEAKKSKAGAKKN) form a necessary for interaction with YBX1, binding to RNA, association together with NPM1 to rRNA, endoribonuclease activity on abasic RNA and localization in the nucleoli region. Lysine 6 and lysine 7 each carry N6-acetyllysine; by EP300. The short motif at 8–13 (GAVVED) is the Nuclear localization signal (NLS) element. Over residues 16-38 (EPKTEPEAKKSKAGAKKNEKEAV) the composition is skewed to basic and acidic residues. The necessary for interaction with NPM1 and for efficient rRNA binding stretch occupies residues 23–33 (AKKSKAGAKKN). An N6-acetyllysine mark is found at lysine 27, lysine 31, lysine 32, and lysine 35. Serine 54 carries the post-translational modification Phosphoserine. Residues 64–80 (ICSWNVDGLRAWIKKKG) carry the Nuclear export signal (NES) motif. An S-nitrosocysteine; alternate modification is found at cysteine 65. An intrachain disulfide couples cysteine 65 to cysteine 93. Residue aspartate 70 coordinates Mg(2+). An S-nitrosocysteine; alternate modification is found at cysteine 93. Glutamate 96 contacts Mg(2+). The active site involves tyrosine 171. An N6-acetyllysine modification is found at lysine 197. Mg(2+) contacts are provided by aspartate 210 and asparagine 212. The active-site Proton donor/acceptor is the aspartate 210. Threonine 233 is modified (phosphothreonine; by CDK5). Residues 289–318 (QSVLPALCDSKIRSKALGSDHCPITLYLAL) are mitochondrial targeting sequence (MTS). Aspartate 308 serves as a coordination point for Mg(2+). Cysteine 310 is subject to S-nitrosocysteine.

Belongs to the DNA repair enzymes AP/ExoA family. In terms of assembly, monomer. Homodimer; disulfide-linked. Component of the SET complex, composed of at least APEX1, SET, ANP32A, HMGB2, NME1 and TREX1. Associates with the dimer XRCC5/XRCC6 in a DNA-dependent manner. Interacts with SIRT1; the interaction is increased in the context of genotoxic stress. Interacts with HDAC1, HDAC2 and HDAC3; the interactions are not dependent on the APEX1 acetylation status. Interacts with XRCC1; the interaction is induced by SIRT1 and increased with the APEX1 acetylated form. Interacts with NPM1 (via N-terminal domain); the interaction is RNA-dependent and decreases in hydrogen peroxide-damaged cells. Interacts (via N-terminus) with YBX1 (via C-terminus); the interaction is increased in presence of APEX1 acetylated at Lys-6 and Lys-7. Interacts with HNRNPL; the interaction is DNA-dependent. Interacts (via N-terminus) with KPNA1 and KPNA2. Interacts with TXN; the interaction stimulates the FOS/JUN AP-1 complex DNA-binding activity in a redox-dependent manner. Interacts with GZMA, KRT8, MDM2, POLB, PRDX6, PRPF19, RPLP0, TOMM20 and WDR77. Binds to CDK5. Mg(2+) serves as cofactor. The cofactor is Mn(2+). Phosphorylated. Phosphorylation by kinase PKC or casein kinase CK2 results in enhanced redox activity that stimulates binding of the FOS/JUN AP-1 complex to its cognate binding site. AP-endodeoxyribonuclease activity is not affected by CK2-mediated phosphorylation. Phosphorylation of Thr-233 by CDK5 in response to MPP(+)/MPTP (1-methyl-4-phenylpyridinium) reduces AP-endodeoxyribonuclease activity resulting in accumulation of DNA damage and contributing to neuronal death. In terms of processing, acetylated on Lys-6 and Lys-7. Acetylation is increased by the transcriptional coactivator EP300 acetyltransferase, genotoxic agents like H(2)O(2) and methyl methanesulfonate (MMS). Acetylation increases its binding affinity to the negative calcium response element (nCaRE) DNA promoter. The acetylated form induces a stronger binding of YBX1 to the Y-box sequence in the MDR1 promoter than the unacetylated form. Deacetylated on lysines. Lys-6 and Lys-7 are deacetylated by SIRT1. Post-translationally, cleaved at Lys-31 by granzyme A to create the mitochondrial form; leading in reduction of binding to DNA, AP endodeoxyribonuclease activity, redox activation of transcription factors and to enhanced cell death. Cleaved by granzyme K; leading to intracellular ROS accumulation and enhanced cell death after oxidative stress. Cys-69 and Cys-93 are nitrosylated in response to nitric oxide (NO) and lead to the exposure of the nuclear export signal (NES). In terms of processing, ubiquitinated by MDM2; leading to translocation to the cytoplasm and proteasomal degradation. In terms of tissue distribution, the mitochondrial form is expressed in liver (at protein level). Thymus.

Its subcellular location is the nucleus. It is found in the nucleolus. The protein localises to the nucleus speckle. The protein resides in the endoplasmic reticulum. It localises to the cytoplasm. Its subcellular location is the mitochondrion. The enzyme catalyses Exonucleolytic cleavage in the 3'- to 5'-direction to yield nucleoside 5'-phosphates.. NPM1 stimulates endodeoxyribonuclease activity on double-stranded DNA with AP sites, but inhibits endoribonuclease activity on single-stranded RNA containing AP sites. Functionally, multifunctional protein that plays a central role in the cellular response to oxidative stress. The two major activities of APEX1 are DNA repair and redox regulation of transcriptional factors. Functions as an apurinic/apyrimidinic (AP) endodeoxyribonuclease in the DNA base excision repair (BER) pathway of DNA lesions induced by oxidative and alkylating agents. Initiates repair of AP sites in DNA by catalyzing hydrolytic incision of the phosphodiester backbone immediately adjacent to the damage, generating a single-strand break with 5'-deoxyribose phosphate and 3'-hydroxyl ends. Also incises at AP sites in the DNA strand of DNA/RNA hybrids, single-stranded DNA regions of R-loop structures, and single-stranded RNA molecules. Has 3'-5' exoribonuclease activity on mismatched deoxyribonucleotides at the 3' termini of nicked or gapped DNA molecules during short-patch BER. Possesses DNA 3' phosphodiesterase activity capable of removing lesions (such as phosphoglycolate) blocking the 3' side of DNA strand breaks. May also play a role in the epigenetic regulation of gene expression by participating in DNA demethylation. Acts as a loading factor for POLB onto non-incised AP sites in DNA and stimulates the 5'-terminal deoxyribose 5'-phosphate (dRp) excision activity of POLB. Plays a role in the protection from granzyme-mediated cellular repair leading to cell death. Also involved in the DNA cleavage step of class switch recombination (CSR). On the other hand, APEX1 also exerts reversible nuclear redox activity to regulate DNA binding affinity and transcriptional activity of transcriptional factors by controlling the redox status of their DNA-binding domain, such as the FOS/JUN AP-1 complex after exposure to IR. Involved in calcium-dependent down-regulation of parathyroid hormone (PTH) expression by binding to negative calcium response elements (nCaREs). Together with HNRNPL or the dimer XRCC5/XRCC6, associates with nCaRE, acting as an activator of transcriptional repression. Stimulates the YBX1-mediated MDR1 promoter activity, when acetylated at Lys-6 and Lys-7, leading to drug resistance. Also acts as an endoribonuclease involved in the control of single-stranded RNA metabolism. Plays a role in regulating MYC mRNA turnover by preferentially cleaving in between UA and CA dinucleotides of the MYC coding region determinant (CRD). In association with NMD1, plays a role in the rRNA quality control process during cell cycle progression. Associates, together with YBX1, on the MDR1 promoter. Together with NPM1, associates with rRNA. Binds DNA and RNA. In Bos taurus (Bovine), this protein is DNA repair nuclease/redox regulator APEX1 (APEX1).